We begin with the raw amino-acid sequence, 360 residues long: Carbamoyl phosphate synthase small chain (360 aa).

Residues 1 to 169 (MTKRLLILED…TKTAYPAPGI (169 aa)) form a CPSase region. L-glutamine-binding residues include Ser46, Gly220, and Gly222. The Glutamine amidotransferase type-1 domain maps to 172 to 358 (NIVLVDFGLK…LEMIDSWRCT (187 aa)). Cys247 (nucleophile) is an active-site residue. Positions 248, 251, 289, 291, and 292 each coordinate L-glutamine. Catalysis depends on residues His331 and Asp333.

The protein belongs to the CarA family. In terms of assembly, composed of two chains; the small (or glutamine) chain promotes the hydrolysis of glutamine to ammonia, which is used by the large (or ammonia) chain to synthesize carbamoyl phosphate. Tetramer of heterodimers (alpha,beta)4.

It catalyses the reaction hydrogencarbonate + L-glutamine + 2 ATP + H2O = carbamoyl phosphate + L-glutamate + 2 ADP + phosphate + 2 H(+). The enzyme catalyses L-glutamine + H2O = L-glutamate + NH4(+). The protein operates within amino-acid biosynthesis; L-arginine biosynthesis; carbamoyl phosphate from bicarbonate: step 1/1. It functions in the pathway pyrimidine metabolism; UMP biosynthesis via de novo pathway; (S)-dihydroorotate from bicarbonate: step 1/3. Its function is as follows. Small subunit of the glutamine-dependent carbamoyl phosphate synthetase (CPSase). CPSase catalyzes the formation of carbamoyl phosphate from the ammonia moiety of glutamine, carbonate, and phosphate donated by ATP, constituting the first step of 2 biosynthetic pathways, one leading to arginine and/or urea and the other to pyrimidine nucleotides. The small subunit (glutamine amidotransferase) binds and cleaves glutamine to supply the large subunit with the substrate ammonia. This Streptococcus pyogenes serotype M3 (strain SSI-1) protein is Carbamoyl phosphate synthase small chain.